The sequence spans 246 residues: Small ribosomal subunit protein uS3 (246 aa).

The 80-residue stretch at 19-98 (IDEWLAQNFY…NPMLDARVQA (80 aa)) folds into the KH type-2 domain. The tract at residues 218–246 (LQEETASTLREHMEAARPGEEHEEDREES) is disordered. Residues 226 to 237 (LREHMEAARPGE) show a composition bias toward basic and acidic residues.

This sequence belongs to the universal ribosomal protein uS3 family. In terms of assembly, part of the 30S ribosomal subunit.

In terms of biological role, binds the lower part of the 30S subunit head. This Aeropyrum pernix (strain ATCC 700893 / DSM 11879 / JCM 9820 / NBRC 100138 / K1) protein is Small ribosomal subunit protein uS3.